A 306-amino-acid chain; its full sequence is Mycothiol acetyltransferase (306 aa).

N-acetyltransferase domains follow at residues 17 to 163 (VARV…RPMP) and 166 to 306 (LALS…YRRA). Glu48 is a binding site for 1D-myo-inositol 2-(L-cysteinylamino)-2-deoxy-alpha-D-glucopyranoside. 89-91 (IVV) serves as a coordination point for acetyl-CoA. 1D-myo-inositol 2-(L-cysteinylamino)-2-deoxy-alpha-D-glucopyranoside is bound by residues Glu192, Lys232, and Glu239. Acetyl-CoA-binding positions include 243 to 245 (LGV) and 250 to 256 (AARGLGS). Tyr277 is a binding site for 1D-myo-inositol 2-(L-cysteinylamino)-2-deoxy-alpha-D-glucopyranoside.

Belongs to the acetyltransferase family. MshD subfamily. As to quaternary structure, monomer.

It carries out the reaction 1D-myo-inositol 2-(L-cysteinylamino)-2-deoxy-alpha-D-glucopyranoside + acetyl-CoA = mycothiol + CoA + H(+). Functionally, catalyzes the transfer of acetyl from acetyl-CoA to desacetylmycothiol (Cys-GlcN-Ins) to form mycothiol. This chain is Mycothiol acetyltransferase, found in Clavibacter michiganensis subsp. michiganensis (strain NCPPB 382).